The sequence spans 266 residues: Diphthine synthase (266 aa).

Residues Leu9, Asp84, Val87, 112-113 (SI), Leu169, Ala210, and His235 contribute to the S-adenosyl-L-methionine site.

This sequence belongs to the diphthine synthase family. In terms of assembly, homodimer.

It catalyses the reaction 2-[(3S)-amino-3-carboxypropyl]-L-histidyl-[translation elongation factor 2] + 3 S-adenosyl-L-methionine = diphthine-[translation elongation factor 2] + 3 S-adenosyl-L-homocysteine + 3 H(+). It participates in protein modification; peptidyl-diphthamide biosynthesis. Its function is as follows. S-adenosyl-L-methionine-dependent methyltransferase that catalyzes the trimethylation of the amino group of the modified target histidine residue in translation elongation factor 2 (EF-2), to form an intermediate called diphthine. The three successive methylation reactions represent the second step of diphthamide biosynthesis. In Methanosarcina barkeri (strain Fusaro / DSM 804), this protein is Diphthine synthase.